We begin with the raw amino-acid sequence, 291 residues long: ATP synthase gamma chain (291 aa).

Belongs to the ATPase gamma chain family. F-type ATPases have 2 components, CF(1) - the catalytic core - and CF(0) - the membrane proton channel. CF(1) has five subunits: alpha(3), beta(3), gamma(1), delta(1), epsilon(1). CF(0) has three main subunits: a, b and c.

The protein resides in the cell inner membrane. Produces ATP from ADP in the presence of a proton gradient across the membrane. The gamma chain is believed to be important in regulating ATPase activity and the flow of protons through the CF(0) complex. The chain is ATP synthase gamma chain from Aquifex aeolicus (strain VF5).